The chain runs to 377 residues: Acetylornithine aminotransferase (377 aa).

Residues 94–95 (GT) and Phe121 each bind pyridoxal 5'-phosphate. A N(2)-acetyl-L-ornithine-binding site is contributed by Arg124. Position 206 to 209 (206 to 209 (DEIQ)) interacts with pyridoxal 5'-phosphate. At Lys235 the chain carries N6-(pyridoxal phosphate)lysine. Ser263 contributes to the N(2)-acetyl-L-ornithine binding site. Thr264 contacts pyridoxal 5'-phosphate.

Belongs to the class-III pyridoxal-phosphate-dependent aminotransferase family. ArgD subfamily. Homodimer. Requires pyridoxal 5'-phosphate as cofactor.

It is found in the cytoplasm. It catalyses the reaction N(2)-acetyl-L-ornithine + 2-oxoglutarate = N-acetyl-L-glutamate 5-semialdehyde + L-glutamate. Its pathway is amino-acid biosynthesis; L-arginine biosynthesis; N(2)-acetyl-L-ornithine from L-glutamate: step 4/4. This is Acetylornithine aminotransferase from Lactococcus lactis subsp. lactis (strain IL1403) (Streptococcus lactis).